The following is a 70-amino-acid chain: uncharacterized protein (70 aa).

Residues 4-24 (VKTIAMLAMLVIVAALIYMGY) form a helical membrane-spanning segment.

It localises to the host membrane. This is an uncharacterized protein from Dryophytes versicolor (chameleon treefrog).